The following is a 352-amino-acid chain: Histidinol-phosphate aminotransferase 1 (352 aa).

The residue at position 211 (Lys211) is an N6-(pyridoxal phosphate)lysine.

The protein belongs to the class-II pyridoxal-phosphate-dependent aminotransferase family. Histidinol-phosphate aminotransferase subfamily. As to quaternary structure, homodimer. The cofactor is pyridoxal 5'-phosphate.

The enzyme catalyses L-histidinol phosphate + 2-oxoglutarate = 3-(imidazol-4-yl)-2-oxopropyl phosphate + L-glutamate. The protein operates within amino-acid biosynthesis; L-histidine biosynthesis; L-histidine from 5-phospho-alpha-D-ribose 1-diphosphate: step 7/9. The polypeptide is Histidinol-phosphate aminotransferase 1 (Haemophilus influenzae (strain 86-028NP)).